A 553-amino-acid chain; its full sequence is tRNA pseudouridine synthase 1 (553 aa).

Residues Met1 to Ser78 form a disordered region. 2 stretches are compositionally biased toward basic and acidic residues: residues Arg33–Asp51 and Ser64–Ser78. Catalysis depends on Asp158, which acts as the Nucleophile. Residues Asp517–Pro539 form a disordered region.

Belongs to the tRNA pseudouridine synthase TruA family. It depends on Zn(2+) as a cofactor.

It localises to the nucleus. The catalysed reaction is a uridine in tRNA = a pseudouridine in tRNA. It catalyses the reaction uridine in snRNA = pseudouridine in snRNA. It carries out the reaction a uridine in mRNA = a pseudouridine in mRNA. Its function is as follows. Formation of pseudouridine at positions 27 and 28 in the anticodon stem and loop of transfer RNAs; at positions 34 and 36 of intron-containing precursor tRNA(Ile) and at position 35 in the intron-containing tRNA(Tyr). Catalyzes pseudouridylation at position 44 in U2 snRNA. Also catalyzes pseudouridylation of mRNAs. This Kluyveromyces lactis (strain ATCC 8585 / CBS 2359 / DSM 70799 / NBRC 1267 / NRRL Y-1140 / WM37) (Yeast) protein is tRNA pseudouridine synthase 1 (PUS1).